The chain runs to 420 residues: Mannose-1-phosphate guanylyltransferase regulatory subunit alpha (420 aa).

The interval 2 to 251 is substrate-binding domain; sequence LKAVILIGGP…DGIWSQIKSA (250 aa). 2 residues coordinate GDP-alpha-D-mannose: Glu85 and Gln247. Positions 273–420 are hexapeptide repeat domain; sequence LAKHTPGGPR…SRSFTNQIIL (148 aa). Residues 356–384 are C-loop; sequence TPNDPNPNDPRARMDSESLFKDGKLLPAI.

This sequence belongs to the transferase hexapeptide repeat family. As to quaternary structure, component of the GMPPA-GMPPB mannose-1-phosphate guanylyltransferase complex composed of 4 GMPPA subunits and 8 GMPPB subunits; the complex is organized into three layers, a central layer made up of 2 GMPPA dimers sandwiched between two layers each made up of 2 GMPPB dimers.

Its subcellular location is the cytoplasm. In terms of biological role, regulatory subunit of the GMPPA-GMPPB mannose-1-phosphate guanylyltransferase complex; reduces the catalytic activity of GMPPB when part of the complex. Mediates allosteric feedback inhibition of GMPPB catalytic activity upon binding GDP-alpha-D-mannose. Together with GMPPB regulates GDP-alpha-D-mannose levels. The polypeptide is Mannose-1-phosphate guanylyltransferase regulatory subunit alpha (GMPPA) (Papio anubis (Olive baboon)).